Here is a 496-residue protein sequence, read N- to C-terminus: MNFELKTLSLAAAAAYKCDLLVVLVPEGFLPGSDVLSTLTAHALKQGDLEVKPGKLLQCYAPAGVAARRVVLLGCGAADAHAVRQAMQALAPSFKLPSVKRVALVFGTSAQRGAIGAAVRAVSDGSYVYTATKTKAEPRALLRVTLGVPDAGAAQPEFATATAVAAGVEFAREWANRPANHATPTLVANAAKTLAKYPGVQCQVLGPTEVAKLGMGAFLAVAQGSDQPLRLVELRYNGAARTQAPVVLVGKGITFDTGGISLKPAAEMDEMKFDMGGAASVLGVFRALAELRPAINVVGLIPACENMPDGKAVKPGDVVTSMSGQTIEILNTDAEGRLVLCDALTYAARFKPAAVVDIATLTGACVVALGGLRSGLFASDDLLAEQLLSAGDAALDPCWRMPLDDEYAEGLKSNFADMANVAGRAGGSITAAKFLQRFVGDTPWAHLDIAGTAWKGGAAKGATGRPVGLLVHYLLERATVSTVKPKQKTRSRKSVA.

Residues Lys-251 and Asp-256 each coordinate Mn(2+). Lys-263 is a catalytic residue. Residues Asp-274, Asp-333, and Glu-335 each coordinate Mn(2+). Arg-337 is a catalytic residue.

This sequence belongs to the peptidase M17 family. It depends on Mn(2+) as a cofactor.

It is found in the cytoplasm. It catalyses the reaction Release of an N-terminal amino acid, Xaa-|-Yaa-, in which Xaa is preferably Leu, but may be other amino acids including Pro although not Arg or Lys, and Yaa may be Pro. Amino acid amides and methyl esters are also readily hydrolyzed, but rates on arylamides are exceedingly low.. The catalysed reaction is Release of an N-terminal amino acid, preferentially leucine, but not glutamic or aspartic acids.. Functionally, presumably involved in the processing and regular turnover of intracellular proteins. Catalyzes the removal of unsubstituted N-terminal amino acids from various peptides. The sequence is that of Probable cytosol aminopeptidase from Acidovorax ebreus (strain TPSY) (Diaphorobacter sp. (strain TPSY)).